The sequence spans 1399 residues: DNA-directed RNA polymerase subunit beta' (1399 aa).

The Zn(2+) site is built by Cys-70, Cys-72, Cys-85, and Cys-88. Residues Asp-460, Asp-462, and Asp-464 each contribute to the Mg(2+) site. 4 residues coordinate Zn(2+): Cys-814, Cys-888, Cys-895, and Cys-898.

Belongs to the RNA polymerase beta' chain family. The RNAP catalytic core consists of 2 alpha, 1 beta, 1 beta' and 1 omega subunit. When a sigma factor is associated with the core the holoenzyme is formed, which can initiate transcription. Mg(2+) is required as a cofactor. Zn(2+) serves as cofactor.

The enzyme catalyses RNA(n) + a ribonucleoside 5'-triphosphate = RNA(n+1) + diphosphate. Functionally, DNA-dependent RNA polymerase catalyzes the transcription of DNA into RNA using the four ribonucleoside triphosphates as substrates. This chain is DNA-directed RNA polymerase subunit beta', found in Pseudomonas putida (strain W619).